The chain runs to 285 residues: (2Z,6Z)-farnesyl diphosphate synthase CPT6, chloroplastic (285 aa).

Residues 1 to 30 (MNSLFVGRPIVKSSYNVYTLPSSICGGHFF) constitute a chloroplast transit peptide. Asp-65 is a catalytic residue.

The protein belongs to the UPP synthase family. The cofactor is Mg(2+). Expressed in roots and red fruits.

It localises to the plastid. Its subcellular location is the chloroplast. It carries out the reaction 2 isopentenyl diphosphate + dimethylallyl diphosphate = (2Z,6Z)-farnesyl diphosphate + 2 diphosphate. The catalysed reaction is isopentenyl diphosphate + dimethylallyl diphosphate = neryl diphosphate + diphosphate. The enzyme catalyses neryl diphosphate + isopentenyl diphosphate = (2Z,6Z)-farnesyl diphosphate + diphosphate. Its function is as follows. Uses neryl diphosphate to catalyze the cis-prenyl chain elongation and produce the 15 carbon product (2Z,6Z)-farnesyl diphosphate. The polypeptide is (2Z,6Z)-farnesyl diphosphate synthase CPT6, chloroplastic (Solanum lycopersicum (Tomato)).